Reading from the N-terminus, the 151-residue chain is F-box protein GID2 (151 aa).

The segment covering 1–25 has biased composition (basic and acidic residues); sequence MKRSTTDSDLAGDAHNETNKKMKST. The tract at residues 1–27 is disordered; the sequence is MKRSTTDSDLAGDAHNETNKKMKSTEE. An F-box domain is found at 29–75; the sequence is EIGFSNLDENLVYEVLKHVDAKTLAMSSCVSKIWHKTAQDERLWELI.

Part of some SCF(GID2) complex, which consist of SKP1B, CUL1 cullin, GID2/SLY1 and some RING box protein. Interacts directly with SKP1A and SKP1B. Interacts directly with DELLA proteins GAI, RGA, RGL1, RGL3 and probably RGL2. May have a higher affinity for phosphorylated DELLA proteins. Expressed in all tissues tested, including rosette leaves, green siliques, flowers, stems, cauline leaves and seedlings.

It is found in the nucleus. It functions in the pathway protein modification; protein ubiquitination. Functionally, essential component of the SCF-type E3 ligase complex, SCF(GID2), a complex that positively regulates the gibberellin signaling pathway. Upon gibberellin treatment, the SCF(GID2) complex mediates the ubiquitination and subsequent degradation of DELLA proteins (GAI, RGA and RGL2), some repressors of the gibberellin pathway, leading to activate the pathway. This is F-box protein GID2 (GID2) from Arabidopsis thaliana (Mouse-ear cress).